A 205-amino-acid polypeptide reads, in one-letter code: GTP cyclohydrolase-2 (205 aa).

49 to 53 is a binding site for GTP; the sequence is RIHSE. The Zn(2+) site is built by C54, C65, and C67. Residues Q70, 92 to 94, and T114 contribute to the GTP site; that span reads EGR. D126 serves as the catalytic Proton acceptor. The Nucleophile role is filled by R128. GTP contacts are provided by T149 and K154.

The protein belongs to the GTP cyclohydrolase II family. Zn(2+) serves as cofactor.

It catalyses the reaction GTP + 4 H2O = 2,5-diamino-6-hydroxy-4-(5-phosphoribosylamino)-pyrimidine + formate + 2 phosphate + 3 H(+). Its pathway is cofactor biosynthesis; riboflavin biosynthesis; 5-amino-6-(D-ribitylamino)uracil from GTP: step 1/4. In terms of biological role, catalyzes the conversion of GTP to 2,5-diamino-6-ribosylamino-4(3H)-pyrimidinone 5'-phosphate (DARP), formate and pyrophosphate. In Shewanella piezotolerans (strain WP3 / JCM 13877), this protein is GTP cyclohydrolase-2.